A 254-amino-acid polypeptide reads, in one-letter code: CDP-diacylglycerol pyrophosphatase (254 aa).

The chain crosses the membrane as a helical span at residues 6–26; the sequence is YFLLALLVAILAALAGGYYWL.

Belongs to the Cdh family.

It is found in the cell inner membrane. It catalyses the reaction a CDP-1,2-diacyl-sn-glycerol + H2O = a 1,2-diacyl-sn-glycero-3-phosphate + CMP + 2 H(+). It functions in the pathway phospholipid metabolism; CDP-diacylglycerol degradation; phosphatidate from CDP-diacylglycerol: step 1/1. The chain is CDP-diacylglycerol pyrophosphatase from Klebsiella pneumoniae (strain 342).